A 446-amino-acid chain; its full sequence is N-succinylarginine dihydrolase (446 aa).

Substrate-binding positions include 19 to 28 (AGLSFGNVAS), N110, and 137 to 138 (HR). E174 is a catalytic residue. R213 is a binding site for substrate. H249 is a catalytic residue. Residues D251 and N364 each coordinate substrate. The Nucleophile role is filled by C370.

The protein belongs to the succinylarginine dihydrolase family. As to quaternary structure, homodimer.

It carries out the reaction N(2)-succinyl-L-arginine + 2 H2O + 2 H(+) = N(2)-succinyl-L-ornithine + 2 NH4(+) + CO2. Its pathway is amino-acid degradation; L-arginine degradation via AST pathway; L-glutamate and succinate from L-arginine: step 2/5. Catalyzes the hydrolysis of N(2)-succinylarginine into N(2)-succinylornithine, ammonia and CO(2). In Burkholderia pseudomallei (strain 668), this protein is N-succinylarginine dihydrolase.